The following is a 221-amino-acid chain: Ras-related protein Rab-27A (221 aa).

Ser2 is modified (N-acetylserine). A Phosphoserine modification is found at Ser2. 16–24 serves as a coordination point for GTP; the sequence is GDSGVGKTS. The short motif at 38 to 46 is the Effector region element; sequence FITTVGIDF. GTP is bound by residues 74 to 78, 133 to 136, and 163 to 165; these read DTAGQ, NKSD, and SAA. Cys123 and Cys188 form a disulfide bridge. 2 S-geranylgeranyl cysteine lipidation sites follow: Cys219 and Cys221. Position 221 is a cysteine methyl ester (Cys221).

Belongs to the small GTPase superfamily. Rab family. As to quaternary structure, binds SYTL1, SLAC2B, MYRIP, SYTL3, SYTL4 and SYTL5. Interacts with RPH3A and RPH3A. Binds MLPH and SYTL2. Interacts with UNC13D. Does not interact with the BLOC-3 complex (heterodimer of HPS1 and HPS4). Interacts (GDP-bound form preferentially) with DENND10.

The protein localises to the membrane. The protein resides in the melanosome. Its subcellular location is the late endosome. It is found in the lysosome. The enzyme catalyses GTP + H2O = GDP + phosphate + H(+). Its activity is regulated as follows. Regulated by guanine nucleotide exchange factors (GEFs) which promote the exchange of bound GDP for free GTP, GTPase activating proteins (GAPs) which increase the GTP hydrolysis activity, and GDP dissociation inhibitors which inhibit the dissociation of the nucleotide from the GTPase. Activated by GEFs such as DENND10. Its function is as follows. Small GTPase which cycles between active GTP-bound and inactive GDP-bound states. In its active state, binds to a variety of effector proteins to regulate homeostasis of late endocytic pathway, including endosomal positioning, maturation and secretion. Plays a role in cytotoxic granule exocytosis in lymphocytes. Required for both granule maturation and granule docking and priming at the immunologic synapse. This is Ras-related protein Rab-27A (RAB27A) from Canis lupus familiaris (Dog).